We begin with the raw amino-acid sequence, 133 residues long: S-adenosylmethionine decarboxylase proenzyme (133 aa).

Residue S64 is the Schiff-base intermediate with substrate; via pyruvic acid of the active site. Position 64 is a pyruvic acid (Ser); by autocatalysis (S64). The active-site Proton acceptor; for processing activity is the H69. Catalysis depends on C84, which acts as the Proton donor; for catalytic activity.

Belongs to the prokaryotic AdoMetDC family. Type 1 subfamily. In terms of assembly, heterotetramer of two alpha and two beta chains arranged as a dimer of alpha/beta heterodimers. The cofactor is pyruvate. Post-translationally, is synthesized initially as an inactive proenzyme. Formation of the active enzyme involves a self-maturation process in which the active site pyruvoyl group is generated from an internal serine residue via an autocatalytic post-translational modification. Two non-identical subunits are generated from the proenzyme in this reaction, and the pyruvate is formed at the N-terminus of the alpha chain, which is derived from the carboxyl end of the proenzyme. The post-translation cleavage follows an unusual pathway, termed non-hydrolytic serinolysis, in which the side chain hydroxyl group of the serine supplies its oxygen atom to form the C-terminus of the beta chain, while the remainder of the serine residue undergoes an oxidative deamination to produce ammonia and the pyruvoyl group blocking the N-terminus of the alpha chain.

It catalyses the reaction S-adenosyl-L-methionine + H(+) = S-adenosyl 3-(methylsulfanyl)propylamine + CO2. It participates in amine and polyamine biosynthesis; S-adenosylmethioninamine biosynthesis; S-adenosylmethioninamine from S-adenosyl-L-methionine: step 1/1. Catalyzes the decarboxylation of S-adenosylmethionine to S-adenosylmethioninamine (dcAdoMet), the propylamine donor required for the synthesis of the polyamines spermine and spermidine from the diamine putrescine. This is S-adenosylmethionine decarboxylase proenzyme from Persephonella marina (strain DSM 14350 / EX-H1).